Here is an 842-residue protein sequence, read N- to C-terminus: Leucine--tRNA ligase (842 aa).

The 'HIGH' region signature appears at Pro44 to His55. Positions Lys619–Ser623 match the 'KMSKS' region motif. ATP is bound at residue Lys622.

This sequence belongs to the class-I aminoacyl-tRNA synthetase family.

It localises to the cytoplasm. It catalyses the reaction tRNA(Leu) + L-leucine + ATP = L-leucyl-tRNA(Leu) + AMP + diphosphate. This is Leucine--tRNA ligase from Borrelia turicatae (strain 91E135).